The sequence spans 225 residues: MNSIEFPLLDRTTQNSVISTTSNDLSNWSRLSSLWPLLYGTSCCFIEFASLIGSRFDFDRYGLVPRSSPRQADLILTAGTVTMKMAPSLVRLYEQMPEPKYVIAMGACTITGGMFSTDSYSTVRGVDKLIPVDVYLPGCPPKPEAVIDAITKLRKKVSREISEDRIGSQQENRCFTTNHKFHVGRSTHTGNYDQGLLYQSPSTSEISSETFFKYKSSVSSHELVN.

C43, C44, C108, and C139 together coordinate [4Fe-4S] cluster.

Belongs to the complex I 20 kDa subunit family. As to quaternary structure, NDH is composed of at least 16 different subunits, 5 of which are encoded in the nucleus. Requires [4Fe-4S] cluster as cofactor.

It localises to the plastid. The protein resides in the chloroplast thylakoid membrane. The catalysed reaction is a plastoquinone + NADH + (n+1) H(+)(in) = a plastoquinol + NAD(+) + n H(+)(out). It carries out the reaction a plastoquinone + NADPH + (n+1) H(+)(in) = a plastoquinol + NADP(+) + n H(+)(out). Functionally, NDH shuttles electrons from NAD(P)H:plastoquinone, via FMN and iron-sulfur (Fe-S) centers, to quinones in the photosynthetic chain and possibly in a chloroplast respiratory chain. The immediate electron acceptor for the enzyme in this species is believed to be plastoquinone. Couples the redox reaction to proton translocation, and thus conserves the redox energy in a proton gradient. In Liriodendron tulipifera (Tuliptree), this protein is NAD(P)H-quinone oxidoreductase subunit K, chloroplastic.